The following is a 325-amino-acid chain: Lipid droplet-associated hydrolase (325 aa).

Catalysis depends on S139, which acts as the Nucleophile. Active-site charge relay system residues include D271 and H300.

The protein belongs to the AB hydrolase superfamily. LDAH family. Present in macrophage-rich areas in atherosclerotic lesions (at protein level). Expressed in monocytes and monocyte-derived macrophages (at protein level).

It localises to the lipid droplet. It is found in the endoplasmic reticulum. It catalyses the reaction a cholesterol ester + H2O = cholesterol + a fatty acid + H(+). In terms of biological role, probable serine lipid hydrolase associated with lipid droplets. Has low cholesterol esterase activity. Appears to lack triglyceride lipase activity. Involved in cholesterol and triglyceride homeostasis; has opposing effects, stimulating cellular triglyceride accumulation and cellular cholesterol release. Acts antagonistically with PNPLA2/ATGL in regulation of cellular lipid stores. May regulate triglyceride accumulation indirectly through stimulation of PNPLA2/ATGL ubiquitination and proteasomal degradation. Promotes microtubule-dependent lipid droplet fusion. Highly expressed in macrophage-rich areas in atherosclerotic lesions, suggesting that it could promote cholesterol ester turnover in macrophages. This is Lipid droplet-associated hydrolase from Homo sapiens (Human).